The sequence spans 258 residues: C1q-related factor (258 aa).

The signal sequence occupies residues 1–16; that stretch reads MLLVLVVLIPVLVSSG. The tract at residues 39 to 120 is disordered; that stretch reads GPGAGARSDG…PGSGGSGAIS (82 aa). A compositionally biased stretch (low complexity) spans 67-77; it reads GPQGKPGRTGK. The Collagen-like domain maps to 67–115; sequence GPQGKPGRTGKPGPPGPPGDRGPPGPVGPPGEKGEPGKPGPPGLPGSGG. Residues 78-95 show a composition bias toward pro residues; the sequence is PGPPGPPGDRGPPGPVGP. The C1q domain maps to 125–258; it reads TTVPRVAFYA…TFSGFIIYSD (134 aa).

As to quaternary structure, interacts with ADGRB3. Forms heterooligomers with C1QL4, when proteins are coexpressed; this interaction does not occur after secretion. Expressed in brainstem. More abundant in areas of the nervous system involved in motor function, such as the Purkinje cells of the cerebellum, the accessory olivary nucleus, the pons and the red nucleus.

The protein localises to the secreted. May regulate the number of excitatory synapses that are formed on hippocampus neurons. Has no effect on inhibitory synapses. The protein is C1q-related factor (C1ql1) of Mus musculus (Mouse).